Here is a 185-residue protein sequence, read N- to C-terminus: Signal peptidase complex subunit 3 (185 aa).

At 1–12 (MIVDTFTNRGST) the chain is on the cytoplasmic side. Residues 13 to 34 (FFSKLSTVLFFLCAVITFQGVI) form a helical; Signal-anchor for type II membrane protein membrane-spanning segment. Residues 35-185 (QRREVELDTP…PFHKIITQPK (151 aa)) lie on the Lumenal side of the membrane. An N-linked (GlcNAc...) asparagine glycan is attached at N148.

This sequence belongs to the SPCS3 family. Component of the signal peptidase complex (SPC) composed of a catalytic subunit sec11 and three accessory subunits spc1, spc2 and spc3. The complex induces a local thinning of the ER membrane which is used to measure the length of the signal peptide (SP) h-region of protein substrates. This ensures the selectivity of the complex towards h-regions shorter than 18-20 amino acids. SPC associates with the translocon complex.

The protein resides in the endoplasmic reticulum membrane. Functionally, essential component of the signal peptidase complex (SPC) which catalyzes the cleavage of N-terminal signal sequences from nascent proteins as they are translocated into the lumen of the endoplasmic reticulum. Essential for the SPC catalytic activity, possibly by stabilizing and positioning the active center of the complex close to the lumenal surface. Essential for viability. The chain is Signal peptidase complex subunit 3 (spc3) from Schizosaccharomyces pombe (strain 972 / ATCC 24843) (Fission yeast).